Consider the following 424-residue polypeptide: UPF0229 protein YPTS_2141 (424 aa).

Residues 84–109 (TNDRVDRPQGGGGGGSGQGNAGKDGE) form a disordered region. Over residues 92–105 (QGGGGGGSGQGNAG) the composition is skewed to gly residues.

The protein belongs to the UPF0229 family.

The polypeptide is UPF0229 protein YPTS_2141 (Yersinia pseudotuberculosis serotype IB (strain PB1/+)).